Consider the following 692-residue polypeptide: MARQHKIEDYRNFGIMAHIDAGKTTTTERILYYTGKSHKIGEVHDGAATMDWMDQEQERGITITSAATTAFWKEKRLNIIDTPGHVDFTIEVERSLRVLDGAVAVLDGNAGVEPQTETVWRQADKYKVPRIVFVNKMDKIGADFDKSVESIRDRLGAKAVPIQFPIGSETSLSGLVDLVRMKAVVWDNDALGANFRDEEIPADLMAKAVEAHAYLVEAAVEMDDEAMEAYLGGEEPSEAVLKKCIRKAVLVGAFYPILCGSAFKNKGVQTLLDAVVDYLPSPLDIPPTKGIDFKTEEEVVRHASDEEPLSVLAFKIMDDPFVGSLTFCRIYSGKLETGMSLLNATRDKRERVGRMLLMHSNNREDIKEAYAGDIVALAGLKDTRTGDTLCDPLKSPVILERMEFPAPVIEIAVEPKSKADQEKLGVALAKLAAEDPSFTVSTDFESGQTILKGMGELHLDIKIDILKRTYKVEANIGAPQVAYRESLGRKVDIDYTHKKQTGGTGQFARVMITFEPGEPGSGFVFENSIVGGAVPKEYIPGVEKGLMSVKDNGLLAGFPLIDFKATLTDGKYHDVDSSVLAFEIASRAAFKELREKGAPKLLEPIMAVEVVTPEEYLGSVIGDLNSRRGMIQGQDMRGNATVVNAYVPLANMFGYVNTLRGMSQGRAQFTMQYDHYEPVPQHVADEVIKKYA.

Residues E8–L283 enclose the tr-type G domain. Residues A17–T24, D81–H85, and N135–D138 each bind GTP.

The protein belongs to the TRAFAC class translation factor GTPase superfamily. Classic translation factor GTPase family. EF-G/EF-2 subfamily.

It is found in the cytoplasm. Functionally, catalyzes the GTP-dependent ribosomal translocation step during translation elongation. During this step, the ribosome changes from the pre-translocational (PRE) to the post-translocational (POST) state as the newly formed A-site-bound peptidyl-tRNA and P-site-bound deacylated tRNA move to the P and E sites, respectively. Catalyzes the coordinated movement of the two tRNA molecules, the mRNA and conformational changes in the ribosome. This chain is Elongation factor G, found in Caulobacter sp. (strain K31).